A 392-amino-acid polypeptide reads, in one-letter code: MRDVAIIGYGQTKFGELWEDSFRDLIVEAGVKAIKDANVDGGDIDAMYIGNMSGGLFVGQEHIASLIADHAGLNPVPCTRVEAACASGSLALRSAVLSVASGHHDVVLAGGVEKMTDVEDATAAIASASDQEWEAFFGATFPSLYAMMARRYMYQYGLTIEELSMWSVIAHENATKNKYAQFGFKTTLEQVMNASPVADPLTLMHCSPVSDGASALIVCDADKAEEFAPKDEIIYIKASTQASDTIALHDREDMTTLNAAKVASEKAYKLAKIAPEKIDVAEVHDCFAINGLILVEDLGFCKKGDAGKVIDEGKIRIDYDDFVTVNPSGGLKAAGHALGATGIRQVGELYWQLKQDKECKDRQATIKNGYGIAANVGGTGGTVCVHLLSDKR.

Cys-85 acts as the Acyl-thioester intermediate in catalysis. 4 residues coordinate CoA: Cys-206, Ser-207, Val-209, and Lys-332. His-336 functions as the Proton acceptor in the catalytic mechanism.

The protein belongs to the thiolase-like superfamily. Thiolase family. As to quaternary structure, interacts with HMG-CoA synthase (HMGCS) that catalyzes the second step in the pathway and with a DUF35 protein. The acetoacetyl-CoA thiolase/HMG-CoA synthase complex channels the intermediate via a fused CoA-binding site, which allows for efficient coupling of the endergonic thiolase reaction with the exergonic HMGCS reaction.

The enzyme catalyses 2 acetyl-CoA = acetoacetyl-CoA + CoA. Its pathway is metabolic intermediate biosynthesis; (R)-mevalonate biosynthesis; (R)-mevalonate from acetyl-CoA: step 1/3. Functionally, catalyzes the condensation of two acetyl-coA molecules into acetoacetyl-CoA. Functions in the mevalonate (MVA) pathway leading to isopentenyl diphosphate (IPP), a key precursor for the biosynthesis of isoprenoid compounds that are building blocks of archaeal membrane lipids. The protein is Acetyl-CoA acetyltransferase of Methanothermococcus thermolithotrophicus (Methanococcus thermolithotrophicus).